A 592-amino-acid polypeptide reads, in one-letter code: NADH-ubiquinone oxidoreductase chain 5 (592 aa).

14 helical membrane-spanning segments follow: residues 36–56, 68–88, 89–109, 132–152, 169–189, 196–216, 229–249, 256–276, 279–299, 322–342, 364–386, 406–426, 451–471, and 534–554; these read LSMV…IYAI, FYII…SDNY, IMMF…ISFW, LFVI…FETM, MMLL…GWLL, TPVS…FVLV, LLVM…MAVV, VMAL…GSSA, LAMY…MSAG, LPFS…MPGL, YIMY…RVTY, STHM…LGYA, LPAM…LTTV, and ALIN…IVFF.

Belongs to the complex I subunit 5 family.

It localises to the mitochondrion inner membrane. The catalysed reaction is a ubiquinone + NADH + 5 H(+)(in) = a ubiquinol + NAD(+) + 4 H(+)(out). Functionally, core subunit of the mitochondrial membrane respiratory chain NADH dehydrogenase (Complex I) that is believed to belong to the minimal assembly required for catalysis. Complex I functions in the transfer of electrons from NADH to the respiratory chain. The immediate electron acceptor for the enzyme is believed to be ubiquinone. This Debaryomyces hansenii (strain ATCC 36239 / CBS 767 / BCRC 21394 / JCM 1990 / NBRC 0083 / IGC 2968) (Yeast) protein is NADH-ubiquinone oxidoreductase chain 5 (ND5).